Here is a 492-residue protein sequence, read N- to C-terminus: Adenosylhomocysteinase (492 aa).

The substrate site is built by T68, D153, and E215. T216–T218 lines the NAD(+) pocket. Substrate is bound by residues K245 and D249. NAD(+) is bound by residues N250, G279–G284, E302, N337, I358–H360, and N406.

It belongs to the adenosylhomocysteinase family. It depends on NAD(+) as a cofactor.

It is found in the cytoplasm. It catalyses the reaction S-adenosyl-L-homocysteine + H2O = L-homocysteine + adenosine. The protein operates within amino-acid biosynthesis; L-homocysteine biosynthesis; L-homocysteine from S-adenosyl-L-homocysteine: step 1/1. May play a key role in the regulation of the intracellular concentration of adenosylhomocysteine. The protein is Adenosylhomocysteinase of Mycobacterium leprae (strain Br4923).